The primary structure comprises 366 residues: RNA 3'-terminal phosphate cyclase (366 aa).

Residues Gln-104, Pro-131, Tyr-294, Asp-297, Gln-298, and His-320 each coordinate ATP. His-320 serves as the catalytic Tele-AMP-histidine intermediate.

It belongs to the RNA 3'-terminal cyclase family. Type 1 subfamily.

The protein localises to the nucleus. It is found in the nucleoplasm. It catalyses the reaction a 3'-end 3'-phospho-ribonucleotide-RNA + ATP = a 3'-end 2',3'-cyclophospho-ribonucleotide-RNA + AMP + diphosphate. Catalyzes the conversion of 3'-phosphate to a 2',3'-cyclic phosphodiester at the end of RNA. The mechanism of action of the enzyme occurs in 3 steps: (A) adenylation of the enzyme by ATP; (B) transfer of adenylate to an RNA-N3'P to produce RNA-N3'PP5'A; (C) and attack of the adjacent 2'-hydroxyl on the 3'-phosphorus in the diester linkage to produce the cyclic end product. Likely functions in some aspects of cellular RNA processing. Function plays an important role in regulating axon regeneration by inhibiting central nervous system (CNS) axon regeneration following optic nerve injury. The protein is RNA 3'-terminal phosphate cyclase (RTCA) of Macaca fascicularis (Crab-eating macaque).